Here is a 113-residue protein sequence, read N- to C-terminus: Probable leucocin-A immunity protein (113 aa).

It belongs to the immunity protein EntA family.

In terms of biological role, imparts immunity to leucocin-A to naturally sensitive host strains. This chain is Probable leucocin-A immunity protein, found in Leuconostoc gelidum.